A 156-amino-acid chain; its full sequence is Cellulose synthase operon protein D (156 aa).

It functions in the pathway glycan metabolism; bacterial cellulose biosynthesis. In terms of biological role, may have a major role in the perfection of crystallization, involved either in the pore structure itself or in the organization of the pores within the linear array of terminal synthesizing complexes (TCs). This Komagataeibacter xylinus (Gluconacetobacter xylinus) protein is Cellulose synthase operon protein D (acsD).